A 342-amino-acid chain; its full sequence is Maltose regulon regulatory protein MalI (342 aa).

An HTH lacI-type domain is found at 7-61 (ITIHDVALAAGVSVSTVSLVLSGKGRISTATGERVNAAIEELGFVRNRQASALRG). The segment at residues 9-28 (IHDVALAAGVSVSTVSLVLS) is a DNA-binding region (H-T-H motif).

Functionally, repressor for the malX and malY genes. Also regulates its own expression. Binds maltose as an inducer. This is Maltose regulon regulatory protein MalI (malI) from Escherichia coli (strain K12).